The primary structure comprises 374 residues: Anhydro-N-acetylmuramic acid kinase (374 aa).

12–19 (GTSLDGID) contacts ATP.

This sequence belongs to the anhydro-N-acetylmuramic acid kinase family.

The enzyme catalyses 1,6-anhydro-N-acetyl-beta-muramate + ATP + H2O = N-acetyl-D-muramate 6-phosphate + ADP + H(+). Its pathway is amino-sugar metabolism; 1,6-anhydro-N-acetylmuramate degradation. It participates in cell wall biogenesis; peptidoglycan recycling. In terms of biological role, catalyzes the specific phosphorylation of 1,6-anhydro-N-acetylmuramic acid (anhMurNAc) with the simultaneous cleavage of the 1,6-anhydro ring, generating MurNAc-6-P. Is required for the utilization of anhMurNAc either imported from the medium or derived from its own cell wall murein, and thus plays a role in cell wall recycling. This chain is Anhydro-N-acetylmuramic acid kinase, found in Klebsiella pneumoniae subsp. pneumoniae (strain ATCC 700721 / MGH 78578).